The sequence spans 406 residues: High mobility group nucleosome-binding domain-containing protein 5 (406 aa).

The interval 1–406 (MPKRKAAGDV…GEKEEPLSIV (406 aa)) is disordered. Threonine 29 is subject to Phosphothreonine. The span at 35–44 (KRASTSRKTK) shows a compositional bias: basic residues. 5 stretches are compositionally biased toward basic and acidic residues: residues 63-72 (TKPEDVKDEC), 92-101 (MEAEEVKEQI), 110-126 (GEKK…DELK), 136-159 (EDGK…EGLN), and 166-187 (KSED…KGED). Lysine 64 participates in a covalent cross-link: Glycyl lysine isopeptide (Lys-Gly) (interchain with G-Cter in SUMO2). Residue lysine 98 forms a Glycyl lysine isopeptide (Lys-Gly) (interchain with G-Cter in SUMO1); alternate linkage. Residue lysine 98 forms a Glycyl lysine isopeptide (Lys-Gly) (interchain with G-Cter in SUMO2); alternate linkage. Residue lysine 121 forms a Glycyl lysine isopeptide (Lys-Gly) (interchain with G-Cter in SUMO2) linkage. Positions 188-200 (GKEEGDEKEEEKD) are enriched in acidic residues. Basic and acidic residues-rich tracts occupy residues 201–239 (DKEG…KEGQ), 246–266 (EDLH…KEGQ), 272–284 (KEIH…KEGQ), and 290–311 (KEYL…KEGQ). A compositionally biased stretch (acidic residues) spans 312–325 (PEEDGKEDQPEEDG). A compositionally biased stretch (basic and acidic residues) spans 326–365 (KEGQCKEDGKEGHHEEGGKEDLHEEDGKEKDGGKEDRKEE). Residues 366-376 (GEQEVAVDEGS) show a composition bias toward acidic residues. A compositionally biased stretch (basic and acidic residues) spans 377–406 (DENKVEAEEEGAENKDFKQDGEKEEPLSIV).

The protein belongs to the HMGN family. In terms of tissue distribution, expressed in liver, spleen, lung, heart, kidney, muscle and brain (at protein level). Widely expressed with highest levels in submaxillary gland, thymus, kidney and liver and lowest levels in brain, lung, pancreas and eye.

The protein localises to the nucleus. Functionally, preferentially binds to euchromatin and modulates cellular transcription by counteracting linker histone-mediated chromatin compaction. The polypeptide is High mobility group nucleosome-binding domain-containing protein 5 (Hmgn5) (Mus musculus (Mouse)).